The following is a 139-amino-acid chain: Acidic phospholipase A2 H1E6 (139 aa).

The signal sequence occupies residues methionine 1–glycine 16. Disulfide bonds link cysteine 42/cysteine 132, cysteine 44/cysteine 60, cysteine 59/cysteine 111, cysteine 65/cysteine 139, cysteine 66/cysteine 104, cysteine 73/cysteine 97, and cysteine 91/cysteine 102. Ca(2+) is bound by residues tyrosine 43, glycine 45, and glycine 47. Histidine 63 is an active-site residue. Aspartate 64 lines the Ca(2+) pocket. Aspartate 105 is a catalytic residue.

Homodimer. Ca(2+) serves as cofactor. In terms of tissue distribution, expressed by the venom gland.

Its subcellular location is the secreted. The catalysed reaction is a 1,2-diacyl-sn-glycero-3-phosphocholine + H2O = a 1-acyl-sn-glycero-3-phosphocholine + a fatty acid + H(+). Functionally, snake venom phospholipase A2 (PLA2) that inhibits ADP-induced platelet aggregation. PLA2 catalyzes the calcium-dependent hydrolysis of the 2-acyl groups in 3-sn-phosphoglycerides. The chain is Acidic phospholipase A2 H1E6 from Calloselasma rhodostoma (Malayan pit viper).